Reading from the N-terminus, the 732-residue chain is Catalase-peroxidase (732 aa).

Residues 1–26 form a disordered region; the sequence is MADNKKSPETGGITMQIPGKGRTNRD. The tryptophyl-tyrosyl-methioninium (Trp-Tyr) (with M-245) cross-link spans 96 to 219; it reads WHSAGTYRTF…LAAVQMGLIY (124 aa). H97 acts as the Proton acceptor in catalysis. A cross-link (tryptophyl-tyrosyl-methioninium (Tyr-Met) (with W-96)) is located at residues 219-245; it reads YVNPEGPDGNPDPVAAARDIREVFARM. H260 is a heme b binding site. The segment at 344–365 is disordered; it reads KPKGEAGAGTVPDPHDPKKRHA.

The protein belongs to the peroxidase family. Peroxidase/catalase subfamily. Homodimer or homotetramer. Heme b is required as a cofactor. Post-translationally, formation of the three residue Trp-Tyr-Met cross-link is important for the catalase, but not the peroxidase activity of the enzyme.

It carries out the reaction H2O2 + AH2 = A + 2 H2O. The catalysed reaction is 2 H2O2 = O2 + 2 H2O. In terms of biological role, bifunctional enzyme with both catalase and broad-spectrum peroxidase activity. The polypeptide is Catalase-peroxidase (Methanospirillum hungatei JF-1 (strain ATCC 27890 / DSM 864 / NBRC 100397 / JF-1)).